A 159-amino-acid chain; its full sequence is Phosphopantetheine adenylyltransferase (159 aa).

Thr-10 serves as a coordination point for substrate. ATP-binding positions include 10 to 11 (TF) and His-18. 3 residues coordinate substrate: Lys-42, Leu-74, and Arg-88. ATP is bound by residues 89–91 (GLR), Glu-99, and 124–130 (YSFISSS).

The protein belongs to the bacterial CoaD family. As to quaternary structure, homohexamer. The cofactor is Mg(2+).

Its subcellular location is the cytoplasm. The catalysed reaction is (R)-4'-phosphopantetheine + ATP + H(+) = 3'-dephospho-CoA + diphosphate. It functions in the pathway cofactor biosynthesis; coenzyme A biosynthesis; CoA from (R)-pantothenate: step 4/5. Functionally, reversibly transfers an adenylyl group from ATP to 4'-phosphopantetheine, yielding dephospho-CoA (dPCoA) and pyrophosphate. The polypeptide is Phosphopantetheine adenylyltransferase (Campylobacter hominis (strain ATCC BAA-381 / DSM 21671 / CCUG 45161 / LMG 19568 / NCTC 13146 / CH001A)).